The sequence spans 242 residues: Probable transcriptional regulatory protein lp_2253 (242 aa).

The interval 1–21 (MSGHSKWHNIQGRKNAQDAKR) is disordered.

The protein belongs to the TACO1 family.

The protein resides in the cytoplasm. This is Probable transcriptional regulatory protein lp_2253 from Lactiplantibacillus plantarum (strain ATCC BAA-793 / NCIMB 8826 / WCFS1) (Lactobacillus plantarum).